A 293-amino-acid chain; its full sequence is tRNA-cytidine(32) 2-sulfurtransferase (293 aa).

Residues 62–67 (SGGKDS) carry the PP-loop motif motif. Residues Cys-137, Cys-140, and Cys-228 each coordinate [4Fe-4S] cluster.

The protein belongs to the TtcA family. In terms of assembly, homodimer. Mg(2+) is required as a cofactor. The cofactor is [4Fe-4S] cluster.

It is found in the cytoplasm. It catalyses the reaction cytidine(32) in tRNA + S-sulfanyl-L-cysteinyl-[cysteine desulfurase] + AH2 + ATP = 2-thiocytidine(32) in tRNA + L-cysteinyl-[cysteine desulfurase] + A + AMP + diphosphate + H(+). It functions in the pathway tRNA modification. Functionally, catalyzes the ATP-dependent 2-thiolation of cytidine in position 32 of tRNA, to form 2-thiocytidine (s(2)C32). The sulfur atoms are provided by the cysteine/cysteine desulfurase (IscS) system. The polypeptide is tRNA-cytidine(32) 2-sulfurtransferase (Brucella abortus (strain S19)).